The sequence spans 594 residues: Interactor of HORMAD1 protein 1 (594 aa).

Coiled-coil stretches lie at residues 109-135, 165-189, and 219-245; these read VGKS…SETL, QSIL…NDLV, and EMKS…CEQL. The span at 434–443 shows a compositional bias: basic and acidic residues; sequence VEMRGKDKKQ. The segment at 434 to 454 is disordered; it reads VEMRGKDKKQQPRKAHRAHRG. The span at 444–454 shows a compositional bias: basic residues; that stretch reads QPRKAHRAHRG. A phosphoserine mark is found at serine 588 and serine 589.

As to quaternary structure, part of the MCD recombinosome complex, at least composed of IHO1, REC114 and MEI4. Interacts with REC114. Interacts with MEI4. Interacts with HORMAD1. Interacts with ANKRD31.

Its subcellular location is the chromosome. Its function is as follows. Required for DNA double-strand breaks (DSBs) formation in unsynapsed regions during meiotic recombination. Probably acts by forming a complex with MEI4 and REC114, which activates DSBs formation in unsynapsed regions, an essential step to ensure completion of synapsis. Not required for HORMAD1 functions in pairing-independent synaptonemal complex formation, ATR recruitment to unsynapsed axes, meiotic silencing of unsynapsed chromatin (MSUC) or meiotic surveillance. The protein is Interactor of HORMAD1 protein 1 of Homo sapiens (Human).